We begin with the raw amino-acid sequence, 455 residues long: UDP-N-acetylmuramate--L-alanine ligase (455 aa).

109-115 (GTHGKTT) is an ATP binding site.

Belongs to the MurCDEF family.

It is found in the cytoplasm. It carries out the reaction UDP-N-acetyl-alpha-D-muramate + L-alanine + ATP = UDP-N-acetyl-alpha-D-muramoyl-L-alanine + ADP + phosphate + H(+). Its pathway is cell wall biogenesis; peptidoglycan biosynthesis. Its function is as follows. Cell wall formation. This Caldicellulosiruptor saccharolyticus (strain ATCC 43494 / DSM 8903 / Tp8T 6331) protein is UDP-N-acetylmuramate--L-alanine ligase.